The following is a 433-amino-acid chain: 3-deoxy-D-manno-octulosonic acid transferase (433 aa).

A helical; Signal-anchor transmembrane segment spans residues 11-31 (TFLYDCFLIFAFMVGLPRILY). The active-site Proton acceptor is glutamate 70. CMP is bound by residues 277 to 278 (PR), 317 to 319 (IGW), and 344 to 347 (NLLE).

The protein belongs to the glycosyltransferase group 1 family. Glycosyltransferase 30 subfamily.

The protein localises to the cell inner membrane. The catalysed reaction is lipid IVA (E. coli) + CMP-3-deoxy-beta-D-manno-octulosonate = alpha-Kdo-(2-&gt;6)-lipid IVA (E. coli) + CMP + H(+). It catalyses the reaction alpha-Kdo-(2-&gt;6)-lipid IVA (E. coli) + CMP-3-deoxy-beta-D-manno-octulosonate = alpha-Kdo-(2-&gt;4)-alpha-Kdo-(2-&gt;6)-lipid IVA (E. coli) + CMP + H(+). It carries out the reaction alpha-Kdo-(2-&gt;4)-alpha-Kdo-(2-&gt;6)-lipid IVA (E. coli) + CMP-3-deoxy-beta-D-manno-octulosonate = alpha-Kdo-(2-&gt;8)-alpha-Kdo-(2-&gt;4)-alpha-Kdo-(2-&gt;6)-lipid IVA (E. coli) + CMP + H(+). The enzyme catalyses alpha-Kdo-(2-&gt;8)-alpha-Kdo-(2-&gt;4)-alpha-Kdo-(2-&gt;6)-lipid IVA (E. coli) + CMP-3-deoxy-beta-D-manno-octulosonate = alpha-Kdo-(2-&gt;8)-[alpha-Kdo-(2-&gt;4)]-alpha-Kdo-(2-&gt;4)-alpha-Kdo-(2-&gt;6)-lipid IVA + CMP + H(+). The protein operates within bacterial outer membrane biogenesis; LPS core biosynthesis. Functionally, involved in lipopolysaccharide (LPS) biosynthesis. Catalyzes the transfer of predominantly four 3-deoxy-D-manno-octulosonate (Kdo) residues from CMP-Kdo to lipid IV(A), the tetraacyldisaccharide-1,4'-bisphosphate precursor of lipid A. Thus generates the genus-specific LPS epitope of Chlamydia, composed of the trisaccharide alpha-Kdo-(2-&gt;8)-alpha-Kdo-(2-&gt;4)-alpha-Kdo. This Chlamydophila psittaci (strain ATCC VR-125 / 6BC) (Chlamydia psittaci) protein is 3-deoxy-D-manno-octulosonic acid transferase (waaA).